Reading from the N-terminus, the 160-residue chain is MSQLVLDLKCLKDKIATNYDIHNNVYGGNGMEPNIIHPSKRFRIVVRLVDFLFCKSDEEFIKGFFCQMIVRNLHCLNSTNGAEEMRLYMSERLFSAHKDDLRLINGQVLDVRIGVWYGIHQSPPIFEIIDFKILSRNDVRDFCEFVKSPLGEKFLNISNS.

Interacts with CDC13 and STN1.

The protein localises to the nucleus. It localises to the chromosome. Its subcellular location is the telomere. Its function is as follows. Has a role in telomere length regulation and telomere end protection. Acts as an inhibitor of telomerase loading through its interaction with CDC13. The chain is Telomere length regulation protein TEN1 (TEN1) from Saccharomyces cerevisiae (strain ATCC 204508 / S288c) (Baker's yeast).